The chain runs to 325 residues: Inactive S-adenosylmethionine decarboxylase prozyme (325 aa).

The protein belongs to the eukaryotic AdoMetDC family. Forms a heterodimer with S-adenosylmethionine decarboxylase AdoMetDC; heterodimerization is required to activate AdoMetDC.

It participates in amine and polyamine biosynthesis; S-adenosylmethioninamine biosynthesis; S-adenosylmethioninamine from S-adenosyl-L-methionine: step 1/1. Its function is as follows. Probably has no catalytic activity due to the loss of several residues required for processing and catalysis. Forms a complex with S-adenosylmethionine decarboxylase AdoMetDC which is essential to activate AdoMetDC. Required for the biosynthesis of the polyamine spermidine. Required for growth and survival during the bloodstream life cycle stage. In Trypanosoma brucei brucei, this protein is Inactive S-adenosylmethionine decarboxylase prozyme.